The primary structure comprises 310 residues: Keratin, type II cytoskeletal 8 (310 aa).

Residues 1–38 (QRTLKVSSSGPRSFSSRSFSSGPSSRISSSSYSRVGSN) are disordered. Residue lysine 5 forms a Glycyl lysine isopeptide (Lys-Gly) (interchain with G-Cter in SUMO2) linkage. Serine 7, serine 9, serine 15, and serine 16 each carry phosphoserine. The segment covering 7–38 (SSSGPRSFSSRSFSSGPSSRISSSSYSRVGSN) has biased composition (low complexity). Arginine 17 is modified (omega-N-methylarginine). A phosphoserine mark is found at serine 18, serine 21, and serine 25. Arginine 26 is modified (omega-N-methylarginine). Serine 28, serine 31, and serine 33 each carry phosphoserine. Arginine 34 is modified (omega-N-methylarginine). Serine 37 is modified (phosphoserine). The residue at position 42 (arginine 42) is an Asymmetric dimethylarginine; alternate. Arginine 42 carries the omega-N-methylarginine; alternate modification. The tract at residues 92-127 (EKEQIKTLNNKFASFIDKVRFLEQQNKILETKWSFL) is coil 1A. Residues 92–310 (EKEQIKTLNN…LRHTKTEISE (219 aa)) form the IF rod domain. N6-malonyllysine is present on lysine 102. Glycyl lysine isopeptide (Lys-Gly) (interchain with G-Cter in SUMO2) cross-links involve residues lysine 123 and lysine 131. A linker 1 region spans residues 128 to 144 (QQQKTSQSNLDGLFEKY). The interval 145 to 236 (ITNLRRQLDS…HLYEEEIKEM (92 aa)) is coil 1B. Residue lysine 198 forms a Glycyl lysine isopeptide (Lys-Gly) (interchain with G-Cter in SUMO1); alternate linkage. Residue lysine 198 forms a Glycyl lysine isopeptide (Lys-Gly) (interchain with G-Cter in SUMO2); alternate linkage. N6-acetyllysine is present on lysine 208. Position 229 is a phosphotyrosine (tyrosine 229). The interval 237-260 (QSQISDTSVVVSMDNSRSLDLDGI) is linker 12. Serine 254 and serine 275 each carry phosphoserine. Residues 261–310 (IADVRAQYEEIANRSRAEAETMYQIKYEELQLLAGKHGDDLRHTKTEISE) form a coil 2 region. Residue lysine 286 forms a Glycyl lysine isopeptide (Lys-Gly) (interchain with G-Cter in SUMO2) linkage. Lysine 296 is covalently cross-linked (Glycyl lysine isopeptide (Lys-Gly) (interchain with G-Cter in SUMO2); alternate). Residue lysine 296 is modified to N6-acetyllysine; alternate. Residue lysine 305 forms a Glycyl lysine isopeptide (Lys-Gly) (interchain with G-Cter in SUMO2) linkage.

This sequence belongs to the intermediate filament family. As to quaternary structure, heterotetramer of two type I and two type II keratins. Forms a heterodimer with KRT18. Associates with KRT20. Interacts with PNN. When associated with KRT19, interacts with DMD. Interacts with APEX1. Interacts with GPER1. Interacts with EPPK1. Interacts with PKP1 and PKP2. In terms of processing, O-glycosylated. O-GlcNAcylation at multiple sites increases solubility, and decreases stability by inducing proteasomal degradation. O-glycosylated (O-GlcNAcylated), in a cell cycle-dependent manner.

It localises to the cytoplasm. The protein localises to the nucleus. The protein resides in the nucleoplasm. It is found in the nucleus matrix. Its function is as follows. Together with KRT19, helps to link the contractile apparatus to dystrophin at the costameres of striated muscle. This chain is Keratin, type II cytoskeletal 8, found in Potorous tridactylus (Potoroo).